Here is a 358-residue protein sequence, read N- to C-terminus: Peptide chain release factor 1 (358 aa).

Glutamine 235 is modified (N5-methylglutamine). The disordered stretch occupies residues 284–309 (KVESERSASRKSQVGSGDRSERIRTY).

It belongs to the prokaryotic/mitochondrial release factor family. Post-translationally, methylated by PrmC. Methylation increases the termination efficiency of RF1.

It is found in the cytoplasm. In terms of biological role, peptide chain release factor 1 directs the termination of translation in response to the peptide chain termination codons UAG and UAA. The sequence is that of Peptide chain release factor 1 from Bartonella tribocorum (strain CIP 105476 / IBS 506).